A 419-amino-acid chain; its full sequence is UDP-N-acetylglucosamine 1-carboxyvinyltransferase (419 aa).

22–23 contacts phosphoenolpyruvate; the sequence is KN. Arg91 is a UDP-N-acetyl-alpha-D-glucosamine binding site. Residue Cys115 is the Proton donor of the active site. Cys115 carries the 2-(S-cysteinyl)pyruvic acid O-phosphothioketal modification. UDP-N-acetyl-alpha-D-glucosamine contacts are provided by residues 120-124, 160-163, Asp305, and Ile327; these read RPVDL and KVSV.

Belongs to the EPSP synthase family. MurA subfamily.

Its subcellular location is the cytoplasm. The enzyme catalyses phosphoenolpyruvate + UDP-N-acetyl-alpha-D-glucosamine = UDP-N-acetyl-3-O-(1-carboxyvinyl)-alpha-D-glucosamine + phosphate. It participates in cell wall biogenesis; peptidoglycan biosynthesis. Its activity is regulated as follows. In vitro inhibited by covalent binding of fosfomycin and the fungal product terreic acid in the presence of substrate UDP-N-acetylglucosamine, with an inactivation rate constant of 130 M(-1)sec(-1) for terreic acid. Cell wall formation. Adds enolpyruvyl to UDP-N-acetylglucosamine. Target for the antibiotic fosfomycin. The sequence is that of UDP-N-acetylglucosamine 1-carboxyvinyltransferase from Enterobacter cloacae subsp. cloacae (strain ATCC 13047 / DSM 30054 / NBRC 13535 / NCTC 10005 / WDCM 00083 / NCDC 279-56).